Consider the following 100-residue polypeptide: Large ribosomal subunit protein uL23 (100 aa).

Belongs to the universal ribosomal protein uL23 family. As to quaternary structure, part of the 50S ribosomal subunit. Contacts protein L29, and trigger factor when it is bound to the ribosome.

Functionally, one of the early assembly proteins it binds 23S rRNA. One of the proteins that surrounds the polypeptide exit tunnel on the outside of the ribosome. Forms the main docking site for trigger factor binding to the ribosome. In Mycolicibacterium gilvum (strain PYR-GCK) (Mycobacterium gilvum (strain PYR-GCK)), this protein is Large ribosomal subunit protein uL23.